Reading from the N-terminus, the 457-residue chain is Siroheme synthase (457 aa).

Positions 1 to 204 (MDHLPIFCQL…NDQKAITETT (204 aa)) are precorrin-2 dehydrogenase /sirohydrochlorin ferrochelatase. NAD(+)-binding positions include 22-23 (DV) and 43-44 (LA). Serine 128 carries the phosphoserine modification. The tract at residues 216–457 (GEVVLVGAGP…RDKLNWFSNH (242 aa)) is uroporphyrinogen-III C-methyltransferase. S-adenosyl-L-methionine is bound at residue proline 225. Aspartate 248 serves as the catalytic Proton acceptor. Lysine 270 serves as the catalytic Proton donor. Residues 301–303 (GGD), isoleucine 306, 331–332 (TA), methionine 382, and glycine 411 contribute to the S-adenosyl-L-methionine site.

This sequence in the N-terminal section; belongs to the precorrin-2 dehydrogenase / sirohydrochlorin ferrochelatase family. In the C-terminal section; belongs to the precorrin methyltransferase family.

The catalysed reaction is uroporphyrinogen III + 2 S-adenosyl-L-methionine = precorrin-2 + 2 S-adenosyl-L-homocysteine + H(+). It catalyses the reaction precorrin-2 + NAD(+) = sirohydrochlorin + NADH + 2 H(+). The enzyme catalyses siroheme + 2 H(+) = sirohydrochlorin + Fe(2+). Its pathway is cofactor biosynthesis; adenosylcobalamin biosynthesis; precorrin-2 from uroporphyrinogen III: step 1/1. The protein operates within cofactor biosynthesis; adenosylcobalamin biosynthesis; sirohydrochlorin from precorrin-2: step 1/1. It participates in porphyrin-containing compound metabolism; siroheme biosynthesis; precorrin-2 from uroporphyrinogen III: step 1/1. It functions in the pathway porphyrin-containing compound metabolism; siroheme biosynthesis; siroheme from sirohydrochlorin: step 1/1. Its pathway is porphyrin-containing compound metabolism; siroheme biosynthesis; sirohydrochlorin from precorrin-2: step 1/1. Functionally, multifunctional enzyme that catalyzes the SAM-dependent methylations of uroporphyrinogen III at position C-2 and C-7 to form precorrin-2 via precorrin-1. Then it catalyzes the NAD-dependent ring dehydrogenation of precorrin-2 to yield sirohydrochlorin. Finally, it catalyzes the ferrochelation of sirohydrochlorin to yield siroheme. This is Siroheme synthase from Escherichia coli O81 (strain ED1a).